We begin with the raw amino-acid sequence, 69 residues long: Mitotic-spindle organizing protein 1 (69 aa).

It belongs to the MOZART1 family. In terms of assembly, part of the gamma-tubulin complex.

The protein localises to the cytoplasm. It is found in the cytoskeleton. It localises to the microtubule organizing center. Its subcellular location is the spindle. Its function is as follows. Required for gamma-tubulin complex recruitment to the microtubule organizing centers (MTOCs). The protein is Mitotic-spindle organizing protein 1 of Picea sitchensis (Sitka spruce).